The chain runs to 456 residues: Bifunctional protein GlmU (456 aa).

Residues 1–229 are pyrophosphorylase; the sequence is MLNNTMSVVI…ISETDGVNNR (229 aa). UDP-N-acetyl-alpha-D-glucosamine contacts are provided by residues 11–14, Lys25, Gln76, 81–82, 103–105, Gly140, Glu154, Asn169, and Asn227; these read LAAG, GT, and YGD. Asp105 is a Mg(2+) binding site. Position 227 (Asn227) interacts with Mg(2+). The interval 230–250 is linker; it reads LQLSRLERIYQAEQAEKLLLA. Positions 251 to 456 are N-acetyltransferase; that stretch reads GVMLRDPARF…QGWQRPVKKK (206 aa). UDP-N-acetyl-alpha-D-glucosamine contacts are provided by Arg333 and Lys351. The active-site Proton acceptor is His363. Positions 366 and 377 each coordinate UDP-N-acetyl-alpha-D-glucosamine. Residues Ala380, 386–387, Ser405, Ala423, and Arg440 each bind acetyl-CoA; that span reads NY.

In the N-terminal section; belongs to the N-acetylglucosamine-1-phosphate uridyltransferase family. The protein in the C-terminal section; belongs to the transferase hexapeptide repeat family. Homotrimer. It depends on Mg(2+) as a cofactor.

Its subcellular location is the cytoplasm. The enzyme catalyses alpha-D-glucosamine 1-phosphate + acetyl-CoA = N-acetyl-alpha-D-glucosamine 1-phosphate + CoA + H(+). The catalysed reaction is N-acetyl-alpha-D-glucosamine 1-phosphate + UTP + H(+) = UDP-N-acetyl-alpha-D-glucosamine + diphosphate. The protein operates within nucleotide-sugar biosynthesis; UDP-N-acetyl-alpha-D-glucosamine biosynthesis; N-acetyl-alpha-D-glucosamine 1-phosphate from alpha-D-glucosamine 6-phosphate (route II): step 2/2. Its pathway is nucleotide-sugar biosynthesis; UDP-N-acetyl-alpha-D-glucosamine biosynthesis; UDP-N-acetyl-alpha-D-glucosamine from N-acetyl-alpha-D-glucosamine 1-phosphate: step 1/1. It functions in the pathway bacterial outer membrane biogenesis; LPS lipid A biosynthesis. Catalyzes the last two sequential reactions in the de novo biosynthetic pathway for UDP-N-acetylglucosamine (UDP-GlcNAc). The C-terminal domain catalyzes the transfer of acetyl group from acetyl coenzyme A to glucosamine-1-phosphate (GlcN-1-P) to produce N-acetylglucosamine-1-phosphate (GlcNAc-1-P), which is converted into UDP-GlcNAc by the transfer of uridine 5-monophosphate (from uridine 5-triphosphate), a reaction catalyzed by the N-terminal domain. The polypeptide is Bifunctional protein GlmU (Enterobacter sp. (strain 638)).